The chain runs to 549 residues: GATA-type transcription factor sreA (549 aa).

A disordered region spans residues 40-100; sequence AQAGREHPQD…TSPKSQKDTS (61 aa). 2 stretches are compositionally biased toward basic and acidic residues: residues 43-72 and 86-97; these read GREHPQDRHYTDNGSRKSEAGAPHSHHEGE and HHVEKTSPKSQK. Residues 106–130 form a GATA-type 1 zinc finger; the sequence is CSNCGTKSTPLWRRSPTGAMICNAC. The disordered stretch occupies residues 141–174; the sequence is RPTKRNRTQASPEAYHPQNQSVGSQPDPAVTGSE. Residues 180–198 form a cystein-rich region (CRR) region; that stretch reads CPGGGNCNGTGGAEGCDGC. The disordered stretch occupies residues 223–244; the sequence is GNSDAVPSPEAEAPARNSGQPE. The segment at 251-275 adopts a GATA-type 2 zinc-finger fold; it reads CQNCGTTVTPLWRRDENGHPICNAC. 3 disordered regions span residues 306 to 332, 375 to 459, and 482 to 535; these read RENSPTAATHSSHGSSASPEASSPATL, NSGA…RLSS, and LGRQ…MREQ. Over residues 309 to 331 the composition is skewed to low complexity; that stretch reads SPTAATHSSHGSSASPEASSPAT. Over residues 383-396 the composition is skewed to pro residues; that stretch reads HHPPPPRLLEPGHP. Low complexity predominate over residues 485–497; that stretch reads QQQSQPHHPQSSP. The segment covering 498 to 515 has biased composition (polar residues); the sequence is LAPTQAASQSLPGVSNMD. The stretch at 511-549 forms a coiled coil; that stretch reads VSNMDNHVEDRRAKLQREAEEMREQLRAKERELAELAGQ. The segment covering 516 to 535 has biased composition (basic and acidic residues); sequence NHVEDRRAKLQREAEEMREQ.

Its subcellular location is the nucleus. Its function is as follows. GATA-type transcription repressor that regulates iron- acquisition genes through specific binding GATA sequence elements of target promoters. Iron acquisition regulation is critical for survival under both iron-limiting conditions (to acquire essential iron) and iron-replete conditions (to limit iron toxicity). SreA targets include genes encoding a number of key iron-regulated factors such as those involved in siderophore biosynthesis. This chain is GATA-type transcription factor sreA, found in Emericella nidulans (strain FGSC A4 / ATCC 38163 / CBS 112.46 / NRRL 194 / M139) (Aspergillus nidulans).